A 460-amino-acid polypeptide reads, in one-letter code: GTPase Der (460 aa).

EngA-type G domains are found at residues 2–164 (QSII…HEEF) and 196–368 (IRVG…ENFT). Residues 8 to 15 (GKPNVGKS), 55 to 59 (DSGGL), 116 to 119 (NKVD), 202 to 209 (GRVNVGKS), 249 to 253 (DTAGI), and 313 to 316 (NKWD) each bind GTP. Residues 369 to 453 (QKIQTSKLNT…PLVIASRKKG (85 aa)) enclose the KH-like domain.

The protein belongs to the TRAFAC class TrmE-Era-EngA-EngB-Septin-like GTPase superfamily. EngA (Der) GTPase family. Associates with the 50S ribosomal subunit.

GTPase that plays an essential role in the late steps of ribosome biogenesis. In Campylobacter jejuni subsp. jejuni serotype O:2 (strain ATCC 700819 / NCTC 11168), this protein is GTPase Der.